The primary structure comprises 51 residues: UPF0181 protein HAPS_0710 (51 aa).

This sequence belongs to the UPF0181 family.

This Glaesserella parasuis serovar 5 (strain SH0165) (Haemophilus parasuis) protein is UPF0181 protein HAPS_0710.